Consider the following 514-residue polypeptide: Putative binding protein HI_0213 (514 aa).

The N-terminal stretch at 1-23 is a signal peptide; it reads MNNLFALCQRSAVIFSIIFTVVA. C24 is lipidated: N-palmitoyl cysteine. C24 carries the S-diacylglycerol cysteine lipid modification.

This sequence belongs to the bacterial solute-binding protein 5 family.

Its subcellular location is the cell membrane. Functionally, part of a binding-protein-dependent transport system. This Haemophilus influenzae (strain ATCC 51907 / DSM 11121 / KW20 / Rd) protein is Putative binding protein HI_0213.